The sequence spans 1702 residues: Dicer-like protein 4 (1702 aa).

Disordered stretches follow at residues 1 to 52 and 89 to 120; these read MRDE…SAAT and SSSS…EKDP. Positions 17–31 are enriched in basic and acidic residues; the sequence is GKRDREQKNCEEEKN. The segment covering 89 to 105 has biased composition (low complexity); sequence SSSSVSSFSSSSSSLFS. Residues 131 to 307 enclose the Helicase ATP-binding domain; the sequence is LCKKATEENV…SENLSKSINS (177 aa). 144–151 lines the ATP pocket; it reads LGTGCGKT. The DECH box signature appears at 251–254; it reads DECH. The Helicase C-terminal domain occupies 475–629; the sequence is QLIKILSVFR…RMNLEITYRS (155 aa). The 93-residue stretch at 656–748 folds into the Dicer dsRNA-binding fold domain; that stretch reads SISLLYKYCS…LPDSKDEIED (93 aa). Residues 932-1054 form the PAZ domain; sequence LVEDIFPPSG…IPPELSHLKI (123 aa). 2 RNase III domains span residues 1083–1251 and 1292–1436; these read ELKH…VDSG and LETL…LDCG. The Mg(2+) site is built by glutamate 1330, aspartate 1422, and glutamate 1425. 2 DRBM domains span residues 1462-1528 and 1621-1697; these read SPIK…NLKA and TAKS…CLKH.

It belongs to the helicase family. Dicer subfamily. In terms of assembly, interacts with DRB4. The cofactor is Mg(2+). Requires Mn(2+) as cofactor.

The protein localises to the nucleus. Ribonuclease (RNase) III involved in RNA-mediated post-transcriptional gene silencing (PTGS). Functions in the biogenesis of trans-acting small interfering RNAs (ta-siRNAs, derived from the TAS1, TAS2 or TAS3 endogenous transcripts) by cleaving small dsRNAs into 21-24 nucleotide ta-siRNAs. Functions with the dsRNA-binding protein DRB4 in ta-siRNAs processing. Acts in the RDR6/SGS3/DCL4/AGO7 ta-siRNA pathway involved in leaf developmental timing. Plays a role in transitive silencing of transgenes by processing secondary siRNAs. This pathway, which requires DCL2 and RDR6, amplifies silencing by using the target RNA as substrate to generate secondary siRNAs, providing an efficient mechanism for long-distance silencing. Required for the production of the 30-40 nucleotide bacterial-induced long siRNAs (lsiRNA). May participate with DCL3 in the production of 24 nucleotide repeat-associated siRNAs (ra-siRNAs) which derive from heterochromatin and DNA repeats such as transposons. Plays an important role in antiviral RNA silencing. Involved in the production of viral siRNAs derived from the cucumber mosaic virus (CMV), turnip crinkle virus (TCV) and tobacco rattle virus (TRV). Targeted by the viral silencing suppressor (VSR) protein 2b of the cucumber mosaic virus (CMV) that inactivates DCL4 function in RNA silencing. Does not seem to be involved in microRNAs (miRNAs) processing. The sequence is that of Dicer-like protein 4 (DCL4) from Arabidopsis thaliana (Mouse-ear cress).